The chain runs to 488 residues: Ribulose bisphosphate carboxylase large chain (488 aa).

Substrate-binding residues include Asn-128 and Thr-178. The Proton acceptor role is filled by Lys-180. Lys-182 lines the substrate pocket. Residues Lys-206, Asp-208, and Glu-209 each contribute to the Mg(2+) site. An N6-carboxylysine modification is found at Lys-206. Catalysis depends on His-298, which acts as the Proton acceptor. Residues Arg-299, His-331, and Ser-383 each contribute to the substrate site.

This sequence belongs to the RuBisCO large chain family. Type I subfamily. In terms of assembly, heterohexadecamer of 8 large chains and 8 small chains. The cofactor is Mg(2+).

It carries out the reaction 2 (2R)-3-phosphoglycerate + 2 H(+) = D-ribulose 1,5-bisphosphate + CO2 + H2O. It catalyses the reaction D-ribulose 1,5-bisphosphate + O2 = 2-phosphoglycolate + (2R)-3-phosphoglycerate + 2 H(+). Functionally, ruBisCO catalyzes two reactions: the carboxylation of D-ribulose 1,5-bisphosphate, the primary event in carbon dioxide fixation, as well as the oxidative fragmentation of the pentose substrate. Both reactions occur simultaneously and in competition at the same active site. The sequence is that of Ribulose bisphosphate carboxylase large chain from Variovorax paradoxus (strain S110).